A 1201-amino-acid polypeptide reads, in one-letter code: Transcription-repair-coupling factor (1201 aa).

The segment at methionine 1–glycine 27 is disordered. The Helicase ATP-binding domain maps to aspartate 670 to isoleucine 831. Residue glycine 683–threonine 690 participates in ATP binding. The DEEQ box motif lies at aspartate 784–glutamine 787. In terms of domain architecture, Helicase C-terminal spans valine 852–glutamate 1006.

In the N-terminal section; belongs to the UvrB family. This sequence in the C-terminal section; belongs to the helicase family. RecG subfamily.

It is found in the cytoplasm. Functionally, couples transcription and DNA repair by recognizing RNA polymerase (RNAP) stalled at DNA lesions. Mediates ATP-dependent release of RNAP and its truncated transcript from the DNA, and recruitment of nucleotide excision repair machinery to the damaged site. The polypeptide is Transcription-repair-coupling factor (Myxococcus xanthus).